A 1140-amino-acid polypeptide reads, in one-letter code: Envelopment polyprotein (1140 aa).

An N-terminal signal peptide occupies residues 1 to 17; the sequence is MVGWVCISLVVLATTTA. Topologically, residues 18-489 are lumenal; it reads GLTRNLYELK…VPGLHGWATT (472 aa). Cystine bridges form between Cys-30–Cys-155, Cys-64–Cys-161, Cys-113–Cys-132, Cys-137–Cys-142, Cys-179–Cys-189, and Cys-214–Cys-251. The N-linked (GlcNAc...) asparagine; by host glycan is linked to Asn-138. N-linked (GlcNAc...) asparagine; by host glycosylation occurs at Asn-351. 4 disulfides stabilise this stretch: Cys-380–Cys-439, Cys-384–Cys-393, Cys-409–Cys-428, and Cys-456–Cys-479. The N-linked (GlcNAc...) asparagine; by host glycan is linked to Asn-403. The helical transmembrane segment at 490–510 threads the bilayer; that stretch reads ALLITFCFGWLLIPTITMIIL. Topologically, residues 511-631 are cytoplasmic; the sequence is KILRLLTFSC…LGVFRYKSRC (121 aa). Residues 520 to 537 form a binding to the ribonucleoprotein region; the sequence is CSHYSTESKFKAILERVK. CCHC-type zinc fingers lie at residues 549-569 and 574-595; these read CDVCHHECETAKELETHKKSC and CPYCMTMTESTESALQAHFSIC. 3 binding to the ribonucleoprotein regions span residues 592 to 609, 596 to 607, and 615 to 629; these read FSICKLTNRFQENLKKSL, KLTNRFQENLKK, and KQGCYRTLGVFRYKS. An interaction with host TRAF3 region spans residues 611-638; that stretch reads RPEVKQGCYRTLGVFRYKSRCYVGLVWG. Positions 615-638 constitute an ITAM domain; it reads KQGCYRTLGVFRYKSRCYVGLVWG. Residues Tyr-619 and Tyr-632 each carry the phosphotyrosine; by host modification. Positions 619 to 622 match the YxxL motif; that stretch reads YRTL. Residues 632–652 form a helical membrane-spanning segment; the sequence is YVGLVWGVLLTTELIVWAASA. Over 653 to 1108 the chain is Lumenal; sequence DTPLMESGWS…EWLLGILNGN (456 aa). 8 cysteine pairs are disulfide-bonded: Cys-739–Cys-774, Cys-743–Cys-781, Cys-755–Cys-888, Cys-769–Cys-899, Cys-784–Cys-907, Cys-810–Cys-819, Cys-827–Cys-836, and Cys-867–Cys-871. A fusion loop region spans residues 761–781; that stretch reads YQYETSWGCNPPDCPGVGTGC. N-linked (GlcNAc...) asparagine; by host glycosylation occurs at Asn-931. 5 disulfide bridges follow: Cys-973–Cys-1003, Cys-996–Cys-1048, Cys-1013–Cys-1018, Cys-1049–Cys-1054, and Cys-1088–Cys-1092. The chain crosses the membrane as a helical span at residues 1109-1129; sequence WVVVAVLIVILILSILLFSFF. The tract at residues 1125-1140 is binding to the ribonucleoprotein; sequence LFSFFCPIRGRKNKSN. Topologically, residues 1130–1140 are cytoplasmic; the sequence is CPIRGRKNKSN.

It belongs to the hantavirus envelope glycoprotein family. As to quaternary structure, homodimer. Homotetramer; forms heterotetrameric Gn-Gc spikes in the pre-fusion conformation. Interacts (via C-terminus) with the nucleoprotein. Interacts with host TUFM; this interaction contributes to the virus-induced degradation of mitochondria by autophagy, which leads to degradation of host MAVS and inhibition of type I interferon (IFN) responses. Interacts with host MAP1LC3B; this interaction contributes to the virus-induced degradation of mitochondria by autophagy, which leads to degradation of host MAVS and inhibition of type I interferon (IFN) responses. Interacts (via C-terminus) with host TRAF3 (via N-terminus); this interaction inhibits the formation of TRAF3-TBK1 complexes. In terms of assembly, homodimer. Homotetramer; forms heterotetrameric Gn-Gc spikes in the pre-fusion conformation. Homotrimer; forms homotrimer in the post-fusion conformation at acidic pH. Interacts (via C-terminus) with the nucleoprotein. Envelope polyprotein precursor is quickly cleaved in vivo just after synthesis, presumably by host signal peptidase.

The protein localises to the virion membrane. It is found in the host cell surface. Its subcellular location is the host Golgi apparatus membrane. It localises to the host endoplasmic reticulum membrane. The protein resides in the host mitochondrion. In terms of biological role, forms homotetramers with glycoprotein C at the surface of the virion. Attaches the virion to host cell receptors including integrin ITGAV/ITGB3. This attachment induces virion internalization predominantly through clathrin-dependent endocytosis. Mediates the assembly and budding of infectious virus particles through its interaction with the nucleocapsid protein and the viral genome. May dysregulate normal immune and endothelial cell responses through an ITAM motif. Translocates to mitochondria, binds to host TUFM and recruits MAP1LC3B. These interactions induce mitochondrial autophagy and therefore destruction of host MAVS leading to inhibition of type I interferon (IFN) responses. Concomitant breakdown of glycoprotein N is apparently prevented by the nucleoprotein that may inhibit Gn-stimulated autophagosome-lysosome fusion. Interacts with the viral genomic RNA. Inhibits the host RIG-I/TBK1 pathway by disrupting the formation of TBK1-TRAF3 complexes and downstream signaling responses required for IFN-beta transcription. Its function is as follows. Forms homotetramers with glycoprotein N at the surface of the virion. Attaches the virion to host cell receptors including integrin ITGAV/ITGB3. This attachment induces virion internalization predominantly through clathrin-dependent endocytosis. Class II fusion protein that promotes fusion of viral membrane with host endosomal membrane after endocytosis of the virion. In Homo sapiens (Human), this protein is Envelopment polyprotein (GP).